The chain runs to 141 residues: Hemoglobin subunit alpha (141 aa).

A Globin domain is found at 1-141 (VLSAKDKTNI…VSTVLTSKYR (141 aa)). At Ser-3 the chain carries Phosphoserine. An N6-succinyllysine modification is found at Lys-7. Thr-8 carries the post-translational modification Phosphothreonine. Position 16 is an N6-acetyllysine; alternate (Lys-16). The residue at position 16 (Lys-16) is an N6-succinyllysine; alternate. Tyr-24 bears the Phosphotyrosine mark. N6-succinyllysine is present on Lys-40. Ser-49 is modified (phosphoserine). His-58 is an O2 binding site. His-87 is a binding site for heme b. A Phosphoserine modification is found at Ser-102. Thr-108 carries the post-translational modification Phosphothreonine. A phosphoserine mark is found at Ser-124 and Ser-131. 2 positions are modified to phosphothreonine: Thr-134 and Thr-137. Ser-138 is modified (phosphoserine).

The protein belongs to the globin family. In terms of assembly, heterotetramer of two alpha chains and two beta chains. As to expression, red blood cells.

In terms of biological role, involved in oxygen transport from the lung to the various peripheral tissues. Its function is as follows. Hemopressin acts as an antagonist peptide of the cannabinoid receptor CNR1. Hemopressin-binding efficiently blocks cannabinoid receptor CNR1 and subsequent signaling. The polypeptide is Hemoglobin subunit alpha (HBA) (Mesocricetus auratus (Golden hamster)).